Consider the following 124-residue polypeptide: Small ribosomal subunit protein uS12 (124 aa).

Asp-89 is subject to 3-methylthioaspartic acid. The disordered stretch occupies residues 105-124 (QGVKNRKQARSRYGAKKEKS). The span at 108 to 118 (KNRKQARSRYG) shows a compositional bias: basic residues.

Belongs to the universal ribosomal protein uS12 family. As to quaternary structure, part of the 30S ribosomal subunit. Contacts proteins S8 and S17. May interact with IF1 in the 30S initiation complex.

Its function is as follows. With S4 and S5 plays an important role in translational accuracy. In terms of biological role, interacts with and stabilizes bases of the 16S rRNA that are involved in tRNA selection in the A site and with the mRNA backbone. Located at the interface of the 30S and 50S subunits, it traverses the body of the 30S subunit contacting proteins on the other side and probably holding the rRNA structure together. The combined cluster of proteins S8, S12 and S17 appears to hold together the shoulder and platform of the 30S subunit. The protein is Small ribosomal subunit protein uS12 (rpsL) of Mycolicibacterium smegmatis (strain ATCC 700084 / mc(2)155) (Mycobacterium smegmatis).